The sequence spans 242 residues: TGACG-sequence-specific DNA-binding protein TGA-1B (242 aa).

The segment at 1–125 (EFCDFSGNQA…HSSPNFENNS (125 aa)) is disordered. The span at 18 to 45 (DTSSPELRQSSSGSDVLNATSSTSSHQV) shows a compositional bias: polar residues. Residues 66–79 (EGSRESANDNKGLG) show a composition bias toward basic and acidic residues. Positions 88–125 (SPESQGSGNYGSNVSEGLNYPSDSNKSVHSSPNFENNS) are enriched in polar residues. Residues 183-242 (DEKKRARLVRNRESAQLSRQRKKHYVEELEDKVRIMHSTIQDLNAKVAYIIAENATLKTQ) enclose the bZIP domain. Residues 185-216 (KKRARLVRNRESAQLSRQRKKHYVEELEDKVR) are basic motif. Residues 225 to 239 (LNAKVAYIIAENATL) form a leucine-zipper region.

It belongs to the bZIP family.

It localises to the nucleus. Its function is as follows. Binds specifically to the DNA sequence 5'-TGACG-3'. The polypeptide is TGACG-sequence-specific DNA-binding protein TGA-1B (TGA1B) (Nicotiana tabacum (Common tobacco)).